The sequence spans 209 residues: Inner membrane protein YjdF (209 aa).

Over 1–7 (MTRTLKP) the chain is Periplasmic. A helical transmembrane segment spans residues 8 to 28 (LILNTSALTLTLILIYTGISA). The Cytoplasmic portion of the chain corresponds to 29–31 (HDK). A helical membrane pass occupies residues 32–52 (LTWLMEVTPVIIVVQLLLATA). At 53 to 55 (RRY) the chain is on the periplasmic side. The chain crosses the membrane as a helical span at residues 56-76 (PLTPLLYTLIFLHAIILMVGG). The Cytoplasmic segment spans residues 77-131 (QYTYAKVPVGFEVQEWLGLSRNPYDKLGHFFQGLVPALVAREILVRGMYVRGRKM). A helical membrane pass occupies residues 132–152 (VAFLVCCVALAISAMYELIEW). Residues 153 to 177 (WAALAMGQGADDFLGTQGDQWDTQS) lie on the Periplasmic side of the membrane. A helical transmembrane segment spans residues 178-198 (DMFCALLGALTTVIFLARFHC). Residues 199 to 209 (RQLRRFGLITG) lie on the Cytoplasmic side of the membrane.

The protein resides in the cell inner membrane. The polypeptide is Inner membrane protein YjdF (yjdF) (Escherichia coli (strain K12)).